We begin with the raw amino-acid sequence, 269 residues long: Shikimate dehydrogenase (NADP(+)) (269 aa).

Shikimate-binding positions include 22-24 (TLS) and Thr-68. Lys-72 acts as the Proton acceptor in catalysis. Shikimate-binding residues include Asn-93 and Asp-104. NADP(+)-binding positions include 128–132 (GAGGA), 152–157 (NRTNLR), and Phe-210. Shikimate is bound at residue Tyr-212. Gly-233 contacts NADP(+).

Belongs to the shikimate dehydrogenase family. Homodimer.

It carries out the reaction shikimate + NADP(+) = 3-dehydroshikimate + NADPH + H(+). It participates in metabolic intermediate biosynthesis; chorismate biosynthesis; chorismate from D-erythrose 4-phosphate and phosphoenolpyruvate: step 4/7. Functionally, involved in the biosynthesis of the chorismate, which leads to the biosynthesis of aromatic amino acids. Catalyzes the reversible NADPH linked reduction of 3-dehydroshikimate (DHSA) to yield shikimate (SA). The protein is Shikimate dehydrogenase (NADP(+)) of Saccharolobus islandicus (strain L.S.2.15 / Lassen #1) (Sulfolobus islandicus).